The chain runs to 123 residues: uncharacterized protein (123 aa).

Disordered stretches follow at residues 1 to 33 and 82 to 123; these read MAPPGGKINRPRTELKKKLFKRRRVLSRDRRRK and EKAA…EDKS. Over residues 18-33 the composition is skewed to basic residues; that stretch reads KLFKRRRVLSRDRRRK.

This is an uncharacterized protein from Mus musculus (Mouse).